The chain runs to 157 residues: Cyclic pyranopterin monophosphate synthase (157 aa).

Residues 74–76 (MCH) and 112–113 (ME) each bind substrate. D127 is a catalytic residue.

The protein belongs to the MoaC family. Homohexamer; trimer of dimers.

The enzyme catalyses (8S)-3',8-cyclo-7,8-dihydroguanosine 5'-triphosphate = cyclic pyranopterin phosphate + diphosphate. Its pathway is cofactor biosynthesis; molybdopterin biosynthesis. Catalyzes the conversion of (8S)-3',8-cyclo-7,8-dihydroguanosine 5'-triphosphate to cyclic pyranopterin monophosphate (cPMP). The protein is Cyclic pyranopterin monophosphate synthase of Campylobacter jejuni subsp. jejuni serotype O:2 (strain ATCC 700819 / NCTC 11168).